Here is a 376-residue protein sequence, read N- to C-terminus: Serpin B9 (376 aa).

At Met1 the chain carries N-acetylmethionine.

This sequence belongs to the serpin family. Ov-serpin subfamily.

Its subcellular location is the cytoplasm. Functionally, granzyme B inhibitor. This chain is Serpin B9 (SERPINB9), found in Homo sapiens (Human).